A 254-amino-acid polypeptide reads, in one-letter code: Dihydroanticapsin 7-dehydrogenase (254 aa).

9–31 provides a ligand contact to NAD(+); that stretch reads LITGGASGIGYAAVQAFLNQQAN. Ser-139 contacts substrate. The active-site Proton acceptor is the Tyr-152.

Belongs to the short-chain dehydrogenases/reductases (SDR) family.

The catalysed reaction is L-dihydroanticapsin + NAD(+) = L-anticapsin + NADH + H(+). The protein operates within antibiotic biosynthesis; bacilysin biosynthesis. Part of the bacABCDEFG operon responsible for the biosynthesis of bacilysin, an irreversible inactivator of the glutaminase domain of glucosamine synthetase. Catalyzes the dehydrogenation of the C7-hydroxyl group in the 4S-tetrahydrotyrosine (4S-H4Tyr) to yield anticapsin (epoxycyclohexanonyl-Ala). The protein is Dihydroanticapsin 7-dehydrogenase of Bacillus amyloliquefaciens (Bacillus velezensis).